The chain runs to 310 residues: HTH-type transcriptional regulator PunR (310 aa).

Residues Trp2 to Thr59 enclose the HTH lysR-type domain. A DNA-binding region (H-T-H motif) is located at residues Phe19–Arg38.

Belongs to the LysR transcriptional regulatory family.

The protein localises to the cytoplasm. Transcriptional regulator that activates the expression of punC, which encodes a purine nucleoside transporter. In Escherichia coli O157:H7, this protein is HTH-type transcriptional regulator PunR.